Consider the following 474-residue polypeptide: MSIQAPPRLLELAGQSLLRDQALSISAMEELPRVLYLPLFMEAFSRRHFQTLTVMVQAWPFTCLPLGSLMKTLHLETLKALLEGLHMLLTQKDRPRRWKLQVLDLRDVDENFWARWPGAWALSCFPETTSKRQTAEDCPRMGEHQPLKVFIDICLKEIPQDECLRYLFQWVYQRRGLVHLCCSKLVNYLTPIKYLRKSLKIIYLNSIQELEIRNMSWPRLIRKLRCYLKEMKNLRKLVFSRCHHYTSDNELEGRLVAKFSSVFLRLEHLQLLKIKLITFFSGHLEQLIRCLQNPLENLELTYGYLLEEDMKCLSQYPSLGYLKHLNLSYVLLFRISLEPLGALLEKIAASLKTLILEGCQIHYSQLSAILPGLSRCSQLTTFYFGRNCMSIDALKDLLRHTSGLSKLSLETYPAPEESLNSLVRVNWEIFTPLRAELMCTLREVRQPKRIFIGPTPCPSCGSSPSEELELHLCC.

One copy of the LRR 1; degenerate repeat lies at 97–124; it reads RWKLQVLDLRDVDENFWARWPGAWALSC. The LRR 2; degenerate repeat unit spans residues 179 to 203; the sequence is HLCCSKLVNYLTPIKYLRKSLKIIY. The stretch at 204–230 is one LRR 3; degenerate repeat; the sequence is LNSIQELEIRNMSWPRLIRKLRCYLKE. Residues 231–265 form an LRR 4; degenerate repeat; that stretch reads MKNLRKLVFSRCHHYTSDNELEGRLVAKFSSVFLR. 5 LRR repeats span residues 266–291, 292–323, 324–342, 348–375, and 376–400; these read LEHLQLLKIKLITFFSGHLEQLIRCL, QNPLENLELTYGYLLEEDMKCLSQYPSLGYLK, HLNLSYVLLFRISLEPLGA, AASLKTLILEGCQIHYSQLSAILPGLSR, and CSQLTTFYFGRNCMSIDALKDLLRH.

Belongs to the PRAME family.

The sequence is that of PRAME family member 1 from Homo sapiens (Human).